The sequence spans 210 residues: Urease accessory protein UreE (210 aa).

Residues 136 to 210 (PEGGAYAEPS…HGHSHAHDHK (75 aa)) are disordered. Basic and acidic residues-rich tracts occupy residues 145-169 (SHAH…TSHD) and 178-196 (HDHD…EHCG). Residues 197–210 (HDHHHGHSHAHDHK) show a composition bias toward basic residues.

It belongs to the UreE family.

Its subcellular location is the cytoplasm. Its function is as follows. Involved in urease metallocenter assembly. Binds nickel. Probably functions as a nickel donor during metallocenter assembly. This is Urease accessory protein UreE from Bradyrhizobium sp. (strain ORS 278).